The chain runs to 581 residues: Major facilitator superfamily multidrug transporter NAG4 (581 aa).

A compositionally biased stretch (polar residues) spans 1–14 (MSHATDSTLDNASV). The disordered stretch occupies residues 1–43 (MSHATDSTLDNASVDSEKVRDFGDDLQNHPVQPTRSILSKIRS). N11 carries N-linked (GlcNAc...) asparagine glycosylation. Positions 15–27 (DSEKVRDFGDDLQ) are enriched in basic and acidic residues. N-linked (GlcNAc...) asparagine glycosylation occurs at N125. A run of 12 helical transmembrane segments spans residues 132-152 (WLYT…SAIV), 169-189 (VIIL…PLVF), 199-219 (KPIY…CGAA), 230-250 (LIDG…LADI), 261-281 (AIFS…GGLL), 290-310 (WIYW…IAIV), 365-385 (IVFL…MFFF), 403-423 (GVMF…APFF), 447-467 (LIPM…FAWS), 471-491 (WVSW…FCCL), 510-530 (ALAA…LFTI), and 544-564 (LMAF…FFGA).

It belongs to the major facilitator superfamily. DHA1 family. Polyamines/proton antiporter (TC 2.A.1.2.16) subfamily.

It localises to the cell membrane. MFS transporter involved in N-acetylglucosamine (GlcNAc) uptake. Confers resistance to cycloheximide, 4-nitroquinoline-N-oxide, and 1,10-phenanthroline, and contributes to virulence. This is Major facilitator superfamily multidrug transporter NAG4 from Candida albicans (strain SC5314 / ATCC MYA-2876) (Yeast).